The following is a 287-amino-acid chain: Cyclopropane mycolic acid synthase 3 (287 aa).

S-adenosyl-L-methionine is bound by residues 33–34 (YS), 68–76 (LLDIGCGWG), 94–99 (TLSENQ), and 123–124 (WE). Residue cysteine 269 is part of the active site.

This sequence belongs to the CFA/CMAS family. Homodimer.

The protein resides in the cytoplasm. The catalysed reaction is a 1-acyl-2-(9Z)-enoyl-sn-glycero-3-phospholipid + S-adenosyl-L-methionine = a 1-acyl-2-(9-cyclopronane)-acyl-sn-glycero-3-phospholipid + S-adenosyl-L-homocysteine + H(+). Its pathway is lipid metabolism; mycolic acid biosynthesis. Involved in the phagosome maturation block (PMB). Catalyzes the conversion of a double bond to a cyclopropane ring at the proximal position of an alpha mycolic acid via the transfer of a methylene group from S-adenosyl-L-methionine. It can use cis, cis 11,14-eicosadienoic acid and linoelaidic acid as substrate. Cyclopropanated mycolic acids are key factors participating in cell envelope permeability, host immunomodulation and persistence. This is Cyclopropane mycolic acid synthase 3 (pcaA) from Mycobacterium tuberculosis (strain CDC 1551 / Oshkosh).